Reading from the N-terminus, the 273-residue chain is Rhamnulose-1-phosphate aldolase (273 aa).

Residue E117 is part of the active site. Zn(2+)-binding residues include H140, H142, and H211.

The protein belongs to the aldolase class II family. RhaD subfamily. It depends on Zn(2+) as a cofactor.

Its subcellular location is the cytoplasm. The catalysed reaction is L-rhamnulose 1-phosphate = (S)-lactaldehyde + dihydroxyacetone phosphate. The protein operates within carbohydrate degradation; L-rhamnose degradation; glycerone phosphate from L-rhamnose: step 3/3. Its function is as follows. Catalyzes the reversible cleavage of L-rhamnulose-1-phosphate to dihydroxyacetone phosphate (DHAP) and L-lactaldehyde. The polypeptide is Rhamnulose-1-phosphate aldolase (Listeria monocytogenes serotype 4a (strain HCC23)).